The sequence spans 510 residues: Sulfoquinovosyl transferase SQD2 (510 aa).

A chloroplast-targeting transit peptide spans 1–83 (MTTLSSINLS…SNDMTITQVR (83 aa)). S88 carries the post-translational modification Phosphoserine. Residues 198–218 (PGVMVFGALAIAKMLSVPIVM) form a helical membrane-spanning segment.

Belongs to the glycosyltransferase group 1 family. Glycosyltransferase 4 subfamily.

It localises to the plastid. Its subcellular location is the chloroplast membrane. It carries out the reaction UDP-alpha-D-6-sulfoquinovose + a 1,2-diacyl-sn-glycerol = a 6-sulfo-alpha-D-quinovosyldiacylglycerol + UDP + H(+). Its pathway is glycolipid biosynthesis. Its function is as follows. Catalyzes the transfer of the sulfoquinovose moiety from UDP-sulfoquinovose to diacylglycerol during sulfolipid biosynthesis. Sulfolipid contributes to maintaining a negatively charged lipid-water interface, a requirement for proper function of photosynthetic membranes. Sulfolipid may also function as a substitute of anionic phospholipids under phosphate-limited growth conditions. The polypeptide is Sulfoquinovosyl transferase SQD2 (Arabidopsis thaliana (Mouse-ear cress)).